The primary structure comprises 47 residues: Protein RL9A (47 aa).

A helical transmembrane segment spans residues 27-47 (CMIIVIMIAISIWILTYVLFL).

It localises to the host membrane. This is Protein RL9A (RL9A) from Human cytomegalovirus (strain Merlin) (HHV-5).